The sequence spans 387 residues: Phosphoglycerate kinase (387 aa).

Substrate is bound by residues 21-23 (DLN), R36, 59-62 (HLGR), R113, and R146. ATP-binding positions include K197, E314, and 340–343 (GGDT).

This sequence belongs to the phosphoglycerate kinase family. Monomer.

Its subcellular location is the cytoplasm. The catalysed reaction is (2R)-3-phosphoglycerate + ATP = (2R)-3-phospho-glyceroyl phosphate + ADP. It participates in carbohydrate degradation; glycolysis; pyruvate from D-glyceraldehyde 3-phosphate: step 2/5. The chain is Phosphoglycerate kinase from Salmonella schwarzengrund (strain CVM19633).